The sequence spans 185 residues: Orotate phosphoribosyltransferase (185 aa).

Residues arginine 99, lysine 100, lysine 103, and 125 to 133 each bind 5-phospho-alpha-D-ribose 1-diphosphate; that span reads EDVTTTGGS. The orotate site is built by threonine 129 and arginine 157.

The protein belongs to the purine/pyrimidine phosphoribosyltransferase family. PyrE subfamily. As to quaternary structure, homodimer. Mg(2+) serves as cofactor.

It catalyses the reaction orotidine 5'-phosphate + diphosphate = orotate + 5-phospho-alpha-D-ribose 1-diphosphate. It participates in pyrimidine metabolism; UMP biosynthesis via de novo pathway; UMP from orotate: step 1/2. Its function is as follows. Catalyzes the transfer of a ribosyl phosphate group from 5-phosphoribose 1-diphosphate to orotate, leading to the formation of orotidine monophosphate (OMP). The sequence is that of Orotate phosphoribosyltransferase from Methanococcus maripaludis (strain DSM 14266 / JCM 13030 / NBRC 101832 / S2 / LL).